The chain runs to 110 residues: Ig lambda-1 chain V region S178 (110 aa).

The region spanning glutamine 1–leucine 106 is the Ig-like domain.

In Mus musculus (Mouse), this protein is Ig lambda-1 chain V region S178.